Consider the following 229-residue polypeptide: Rab-like protein 2A (229 aa).

Residues 28-35, 76-80, and 133-136 contribute to the GTP site; these read GDSAVGKS, DTAGQ, and NKID. Positions 200 to 229 are disordered; sequence NLEQEEEDVPDQEQSGSIETPSEEVASPHS.

The protein belongs to the small GTPase superfamily. Rab family. Interacts with IFT27, IFT81, IFT172, ATP6V1E1, HK1, LDHC, MAPRE1 and HSPA2.

In terms of biological role, plays an essential role in male fertility, sperm intra-flagellar transport, and tail assembly. Binds, in a GTP-regulated manner, to a specific set of effector proteins including key proteins involved in cilia development and function and delivers them into the growing sperm tail. In Pongo abelii (Sumatran orangutan), this protein is Rab-like protein 2A (RABL2A).